The primary structure comprises 511 residues: Glucose-1-phosphate adenylyltransferase large subunit 1, chloroplastic/amyloplastic (511 aa).

The transit peptide at Met1 to Ala58 directs the protein to the chloroplast.

The protein belongs to the bacterial/plant glucose-1-phosphate adenylyltransferase family. Heterotetramer composed of two small and two large subunits. In terms of tissue distribution, expressed in leaves and stems.

It is found in the plastid. The protein resides in the chloroplast. It localises to the amyloplast. It carries out the reaction alpha-D-glucose 1-phosphate + ATP + H(+) = ADP-alpha-D-glucose + diphosphate. It participates in glycan biosynthesis; starch biosynthesis. With respect to regulation, activated by 3'phosphoglycerate, inhibited by orthophosphate. Allosteric regulation. In terms of biological role, involved in synthesis of starch. Catalyzes the synthesis of ADP-glucose, a molecule that serves as an activated glycosyl donor for alpha-1,4-glucan synthesis. Essential for starch synthesis in leaf chloroplasts and endosperm amyloplasts. The protein is Glucose-1-phosphate adenylyltransferase large subunit 1, chloroplastic/amyloplastic of Oryza sativa subsp. japonica (Rice).